The following is a 232-amino-acid chain: Ureidoacrylate amidohydrolase RutB (232 aa).

Asp26 serves as the catalytic Proton acceptor. The active site involves Lys135. Cys168 (nucleophile) is an active-site residue.

The protein belongs to the isochorismatase family. RutB subfamily.

It carries out the reaction (Z)-3-ureidoacrylate + H2O + H(+) = (Z)-3-aminoacrylate + NH4(+) + CO2. The catalysed reaction is (Z)-3-ureidoacrylate + H2O = (Z)-3-aminoacrylate + carbamate + H(+). The enzyme catalyses (Z)-2-methylureidoacrylate + H2O + H(+) = (Z)-2-methylaminoacrylate + NH4(+) + CO2. Hydrolyzes ureidoacrylate to form aminoacrylate and carbamate. The carbamate hydrolyzes spontaneously, thereby releasing one of the nitrogen atoms of the pyrimidine ring as ammonia and one of its carbon atoms as CO2. The chain is Ureidoacrylate amidohydrolase RutB from Cronobacter turicensis (strain DSM 18703 / CCUG 55852 / LMG 23827 / z3032).